The following is a 93-amino-acid chain: Small ribosomal subunit protein uS17 (93 aa).

Belongs to the universal ribosomal protein uS17 family. Part of the 30S ribosomal subunit.

In terms of biological role, one of the primary rRNA binding proteins, it binds specifically to the 5'-end of 16S ribosomal RNA. This chain is Small ribosomal subunit protein uS17, found in Bordetella avium (strain 197N).